A 261-amino-acid chain; its full sequence is Pantothenate synthetase (261 aa).

ATP is bound at residue 29-36; the sequence is MGALHNGH. Residue His-36 is the Proton donor of the active site. Gln-60 serves as a coordination point for (R)-pantoate. Residue Gln-60 participates in beta-alanine binding. 147–150 provides a ligand contact to ATP; it reads GEKD. Gln-153 lines the (R)-pantoate pocket. ATP is bound at residue 184–187; sequence LSSR.

This sequence belongs to the pantothenate synthetase family. Homodimer.

The protein resides in the cytoplasm. It carries out the reaction (R)-pantoate + beta-alanine + ATP = (R)-pantothenate + AMP + diphosphate + H(+). The protein operates within cofactor biosynthesis; (R)-pantothenate biosynthesis; (R)-pantothenate from (R)-pantoate and beta-alanine: step 1/1. Its function is as follows. Catalyzes the condensation of pantoate with beta-alanine in an ATP-dependent reaction via a pantoyl-adenylate intermediate. This is Pantothenate synthetase from Francisella tularensis subsp. mediasiatica (strain FSC147).